A 597-amino-acid chain; its full sequence is Polyphenol oxidase latent form, chloroplastic (597 aa).

A chloroplast-targeting transit peptide spans 1 to 49 (MATAPSPTTMGTYSSLISTNSFSTFLPNKSQLSLSGKSKHYVARRSSIS). A disordered region spans residues 49 to 70 (SCKATNNNNSNNQNEQQEESSR). The transit peptide at 50-101 (CKATNNNNSNNQNEQQEESSRLLGKLDRRNILIGLGGLYGATTLDRKPFAFA) directs the protein to the thylakoid. Positions 54–63 (NNNNSNNQNE) are enriched in low complexity. Disulfide bonds link Cys-112–Cys-128 and Cys-127–Cys-189. Cu cation-binding residues include His-188, His-209, His-218, His-341, His-345, and His-375. The segment at residues 192–209 (CNGAYPQVGFTDNDIQVH) is a cross-link (2'-(S-cysteinyl)-histidine (Cys-His)).

Belongs to the tyrosinase family. In terms of assembly, monomer. The cofactor is Cu(2+). Expressed in immature-green fruit.

Its subcellular location is the plastid. The protein resides in the chloroplast thylakoid lumen. The enzyme catalyses 2 catechol + O2 = 2 1,2-benzoquinone + 2 H2O. With respect to regulation, activated in the presence of substrate at low pH. Specific activity fluctuates during fruit ripening, starting at immature-green stage, reaching a peak at the breaker stage, followed by a sharp decrease until the half-ripe stage to remain stable during the following development stages. Triggered by CuSO(4) and by low concentrations of SDS. Repressed by several inhibitors including 4-hexylresorcinol, ascorbic acid, benzoic acid, kojic acid, glutathione (reduced form), L-cysteine and sodium metabisulfite. Inhibited by various salt such as FeSO(4), KCl, NaCl, CaCl(2), MnCl(2), NiCl(2) and AlCl(3). Spontaneously activated during storage at 4 degrees Celsius. Functionally, catalyzes the oxidation of mono- and o-diphenols to o-diquinones. Uses preferentially 4-methylcatechol and chlorogenic acid as substrates, followed by caffeic acid, pyrogallol, and catechol, but barely active toward dopamine and L-dopa. No activity detected with monophenols (e.g. phenol and tyramine). The sequence is that of Polyphenol oxidase latent form, chloroplastic from Prunus armeniaca (Apricot).